The chain runs to 476 residues: Aspartyl/glutamyl-tRNA(Asn/Gln) amidotransferase subunit B (476 aa).

This sequence belongs to the GatB/GatE family. GatB subfamily. As to quaternary structure, heterotrimer of A, B and C subunits.

The enzyme catalyses L-glutamyl-tRNA(Gln) + L-glutamine + ATP + H2O = L-glutaminyl-tRNA(Gln) + L-glutamate + ADP + phosphate + H(+). It carries out the reaction L-aspartyl-tRNA(Asn) + L-glutamine + ATP + H2O = L-asparaginyl-tRNA(Asn) + L-glutamate + ADP + phosphate + 2 H(+). Its function is as follows. Allows the formation of correctly charged Asn-tRNA(Asn) or Gln-tRNA(Gln) through the transamidation of misacylated Asp-tRNA(Asn) or Glu-tRNA(Gln) in organisms which lack either or both of asparaginyl-tRNA or glutaminyl-tRNA synthetases. The reaction takes place in the presence of glutamine and ATP through an activated phospho-Asp-tRNA(Asn) or phospho-Glu-tRNA(Gln). The sequence is that of Aspartyl/glutamyl-tRNA(Asn/Gln) amidotransferase subunit B from Albidiferax ferrireducens (strain ATCC BAA-621 / DSM 15236 / T118) (Rhodoferax ferrireducens).